We begin with the raw amino-acid sequence, 768 residues long: Pentatricopeptide repeat-containing protein At4g01030, mitochondrial (768 aa).

Residues 1-25 (MYRFLGLTIHGGLIKRGLDNSDTRV) constitute a mitochondrion transit peptide. PPR repeat units lie at residues 22–52 (DTRV…MPKR), 53–87 (DDLA…GAKA), 88–122 (YDST…GLES), 123–153 (NVSM…MKDR), 154–188 (NLSS…GLKP), 189–223 (DIVT…GLKP), 224–254 (STSS…ILRN), 259–289 (DVYV…MDAK), 290–324 (NIVA…GIKP), 325–359 (DAIT…GVAP), 360–394 (NVVS…GVGP), 395–429 (NAAT…NLIC), 430–460 (DAYV…IKNK), 461–495 (SLAS…GMEP), 496–526 (DAIT…MRSR), and 532–562 (TIEH…MSLK). Positions 567–642 (IWGAFLSSCK…QDLWSWIQID (76 aa)) are type E motif. The segment at 643–673 (QTVHIFYAEGKTHPDEGDIYFELYKLVSEMK) is type E(+) motif. The type DYW motif stretch occupies residues 674-768 (KSGYVPDTSC…DGKCSCNDSW (95 aa)).

This sequence belongs to the PPR family. PCMP-H subfamily.

It is found in the mitochondrion. The protein is Pentatricopeptide repeat-containing protein At4g01030, mitochondrial (PCMP-H65) of Arabidopsis thaliana (Mouse-ear cress).